The sequence spans 93 residues: Neutrophil cationic peptide 1 type A (93 aa).

An N-terminal signal peptide occupies residues 1 to 19; it reads MRTVPLFAACLLLTLMAQA. A propeptide spanning residues 20-62 is cleaved from the precursor; that stretch reads EPLPRAADHSDTKMKGDREDHVAVISFWEEESTSLEDAGAGAG. Intrachain disulfides connect Cys65/Cys93, Cys67/Cys82, and Cys72/Cys92.

It belongs to the alpha-defensin family.

It is found in the secreted. In terms of biological role, has antibiotic, anti-fungi and antiviral activity. This is Neutrophil cationic peptide 1 type A from Cavia porcellus (Guinea pig).